Reading from the N-terminus, the 1068-residue chain is Carbamoyl phosphate synthase large chain (1068 aa).

Residues 1 to 401 (MPLNKDIKKV…AFLKGTRSLE (401 aa)) form a carboxyphosphate synthetic domain region. ATP is bound by residues Arg-129, Arg-169, Gly-175, Gly-176, Lys-208, Val-210, Glu-215, Gly-241, Ile-242, His-243, Gln-284, and Glu-298. Residues 133 to 327 (RNVMSRINEP…IAKVASKIAL (195 aa)) enclose the ATP-grasp 1 domain. Mg(2+) contacts are provided by Gln-284, Glu-298, and Asn-300. Residues Gln-284, Glu-298, and Asn-300 each contribute to the Mn(2+) site. Residues 402–549 (IGKYSLEHKK…YSTYDVYDEV (148 aa)) form an oligomerization domain region. Residues 550 to 932 (EVSKNKKVIV…ALYKGFIGAN (383 aa)) form a carbamoyl phosphate synthetic domain region. In terms of domain architecture, ATP-grasp 2 spans 674–864 (DELLEKLKIA…IVDIATRVML (191 aa)). The ATP site is built by Arg-710, Lys-749, Leu-751, Glu-755, Gly-780, Val-781, His-782, Ser-783, Gln-823, and Glu-835. The Mg(2+) site is built by Gln-823, Glu-835, and Asn-837. The Mn(2+) site is built by Gln-823, Glu-835, and Asn-837. The MGS-like domain maps to 933 to 1068 (ISIKKEKGTV…ETLYIFDLSN (136 aa)). Residues 933 to 1068 (ISIKKEKGTV…ETLYIFDLSN (136 aa)) are allosteric domain.

The protein belongs to the CarB family. As to quaternary structure, composed of two chains; the small (or glutamine) chain promotes the hydrolysis of glutamine to ammonia, which is used by the large (or ammonia) chain to synthesize carbamoyl phosphate. Tetramer of heterodimers (alpha,beta)4. Mg(2+) is required as a cofactor. Requires Mn(2+) as cofactor.

It catalyses the reaction hydrogencarbonate + L-glutamine + 2 ATP + H2O = carbamoyl phosphate + L-glutamate + 2 ADP + phosphate + 2 H(+). The enzyme catalyses hydrogencarbonate + NH4(+) + 2 ATP = carbamoyl phosphate + 2 ADP + phosphate + 2 H(+). The protein operates within amino-acid biosynthesis; L-arginine biosynthesis; carbamoyl phosphate from bicarbonate: step 1/1. It functions in the pathway pyrimidine metabolism; UMP biosynthesis via de novo pathway; (S)-dihydroorotate from bicarbonate: step 1/3. In terms of biological role, large subunit of the glutamine-dependent carbamoyl phosphate synthetase (CPSase). CPSase catalyzes the formation of carbamoyl phosphate from the ammonia moiety of glutamine, carbonate, and phosphate donated by ATP, constituting the first step of 2 biosynthetic pathways, one leading to arginine and/or urea and the other to pyrimidine nucleotides. The large subunit (synthetase) binds the substrates ammonia (free or transferred from glutamine from the small subunit), hydrogencarbonate and ATP and carries out an ATP-coupled ligase reaction, activating hydrogencarbonate by forming carboxy phosphate which reacts with ammonia to form carbamoyl phosphate. The protein is Carbamoyl phosphate synthase large chain of Clostridium botulinum (strain Langeland / NCTC 10281 / Type F).